A 186-amino-acid chain; its full sequence is MDKVTLKKNLQEKMDKALKVLDHELKGLRTGRASVNLLDSVTVEAYGDRMPLSQVASLTTPDARTINVQVWDKSMVSSVEKAITVANLGLTPSSDGQLIRLPIPALTEERRKELAKLAHKYGEDTKISLRNIRRDGNEELKKMEKDNIIAKDEHHSLAEQVQKLTDEYSSKVDSAIKQKEQEIMTV.

It belongs to the RRF family.

The protein resides in the cytoplasm. Functionally, responsible for the release of ribosomes from messenger RNA at the termination of protein biosynthesis. May increase the efficiency of translation by recycling ribosomes from one round of translation to another. This Rickettsia bellii (strain OSU 85-389) protein is Ribosome-recycling factor.